The sequence spans 215 residues: Pyridoxine/pyridoxamine 5'-phosphate oxidase (215 aa).

Substrate is bound by residues 9–12 (RRDY) and Lys69. Residues 64–69 (RVLLLK), 79–80 (FS), Lys86, and Gln108 contribute to the FMN site. Residues Tyr126, Arg130, and Ser134 each contribute to the substrate site. Residues 143–144 (QS) and Trp188 contribute to the FMN site. Residue 194–196 (RLH) participates in substrate binding. Arg198 is an FMN binding site.

Belongs to the pyridoxamine 5'-phosphate oxidase family. In terms of assembly, homodimer. FMN is required as a cofactor.

It catalyses the reaction pyridoxamine 5'-phosphate + O2 + H2O = pyridoxal 5'-phosphate + H2O2 + NH4(+). It carries out the reaction pyridoxine 5'-phosphate + O2 = pyridoxal 5'-phosphate + H2O2. Its pathway is cofactor metabolism; pyridoxal 5'-phosphate salvage; pyridoxal 5'-phosphate from pyridoxamine 5'-phosphate: step 1/1. The protein operates within cofactor metabolism; pyridoxal 5'-phosphate salvage; pyridoxal 5'-phosphate from pyridoxine 5'-phosphate: step 1/1. Functionally, catalyzes the oxidation of either pyridoxine 5'-phosphate (PNP) or pyridoxamine 5'-phosphate (PMP) into pyridoxal 5'-phosphate (PLP). The sequence is that of Pyridoxine/pyridoxamine 5'-phosphate oxidase from Azotobacter vinelandii (strain DJ / ATCC BAA-1303).